A 489-amino-acid polypeptide reads, in one-letter code: Glycogen synthase (489 aa).

R20 lines the ADP-alpha-D-glucose pocket.

Belongs to the glycosyltransferase 1 family. Bacterial/plant glycogen synthase subfamily.

The catalysed reaction is [(1-&gt;4)-alpha-D-glucosyl](n) + ADP-alpha-D-glucose = [(1-&gt;4)-alpha-D-glucosyl](n+1) + ADP + H(+). It functions in the pathway glycan biosynthesis; glycogen biosynthesis. In terms of biological role, synthesizes alpha-1,4-glucan chains using ADP-glucose. This is Glycogen synthase from Chlorobium phaeovibrioides (strain DSM 265 / 1930) (Prosthecochloris vibrioformis (strain DSM 265)).